The chain runs to 484 residues: Arginyl-tRNA--protein transferase 1 (484 aa).

The protein belongs to the R-transferase family.

The catalysed reaction is an N-terminal L-alpha-aminoacyl-[protein] + L-arginyl-tRNA(Arg) = an N-terminal L-arginyl-L-aminoacyl-[protein] + tRNA(Arg) + H(+). In terms of biological role, involved in the post-translational conjugation of arginine to the N-terminal aspartate or glutamate of a protein. This arginylation is required for degradation of the protein via the ubiquitin pathway. Does not arginylate cysteine residues. In Drosophila melanogaster (Fruit fly), this protein is Arginyl-tRNA--protein transferase 1 (Ate1).